Here is a 375-residue protein sequence, read N- to C-terminus: Anhydro-N-acetylmuramic acid kinase (375 aa).

Residue 13-20 (GTSMDGVD) coordinates ATP.

This sequence belongs to the anhydro-N-acetylmuramic acid kinase family.

The enzyme catalyses 1,6-anhydro-N-acetyl-beta-muramate + ATP + H2O = N-acetyl-D-muramate 6-phosphate + ADP + H(+). It participates in amino-sugar metabolism; 1,6-anhydro-N-acetylmuramate degradation. It functions in the pathway cell wall biogenesis; peptidoglycan recycling. Its function is as follows. Catalyzes the specific phosphorylation of 1,6-anhydro-N-acetylmuramic acid (anhMurNAc) with the simultaneous cleavage of the 1,6-anhydro ring, generating MurNAc-6-P. Is required for the utilization of anhMurNAc either imported from the medium or derived from its own cell wall murein, and thus plays a role in cell wall recycling. This chain is Anhydro-N-acetylmuramic acid kinase, found in Pelagibacter ubique (strain HTCC1062).